We begin with the raw amino-acid sequence, 417 residues long: UDP-N-acetylglucosamine 1-carboxyvinyltransferase (417 aa).

22-23 (KN) contacts phosphoenolpyruvate. R92 serves as a coordination point for UDP-N-acetyl-alpha-D-glucosamine. C116 serves as the catalytic Proton donor. 2-(S-cysteinyl)pyruvic acid O-phosphothioketal is present on C116. UDP-N-acetyl-alpha-D-glucosamine-binding positions include 161–164 (KVSV), D305, and I327.

This sequence belongs to the EPSP synthase family. MurA subfamily.

Its subcellular location is the cytoplasm. It catalyses the reaction phosphoenolpyruvate + UDP-N-acetyl-alpha-D-glucosamine = UDP-N-acetyl-3-O-(1-carboxyvinyl)-alpha-D-glucosamine + phosphate. It functions in the pathway cell wall biogenesis; peptidoglycan biosynthesis. In terms of biological role, cell wall formation. Adds enolpyruvyl to UDP-N-acetylglucosamine. The chain is UDP-N-acetylglucosamine 1-carboxyvinyltransferase from Pelagibacter ubique (strain HTCC1062).